Here is a 170-residue protein sequence, read N- to C-terminus: 3-hydroxydecanoyl-[acyl-carrier-protein] dehydratase (170 aa).

His71 is an active-site residue.

Belongs to the thioester dehydratase family. FabA subfamily. In terms of assembly, homodimer.

Its subcellular location is the cytoplasm. The catalysed reaction is a (3R)-hydroxyacyl-[ACP] = a (2E)-enoyl-[ACP] + H2O. It catalyses the reaction (3R)-hydroxydecanoyl-[ACP] = (2E)-decenoyl-[ACP] + H2O. It carries out the reaction (2E)-decenoyl-[ACP] = (3Z)-decenoyl-[ACP]. The protein operates within lipid metabolism; fatty acid biosynthesis. Its function is as follows. Necessary for the introduction of cis unsaturation into fatty acids. Catalyzes the dehydration of (3R)-3-hydroxydecanoyl-ACP to E-(2)-decenoyl-ACP and then its isomerization to Z-(3)-decenoyl-ACP. Can catalyze the dehydratase reaction for beta-hydroxyacyl-ACPs with saturated chain lengths up to 16:0, being most active on intermediate chain length. The sequence is that of 3-hydroxydecanoyl-[acyl-carrier-protein] dehydratase from Chelativorans sp. (strain BNC1).